A 72-amino-acid polypeptide reads, in one-letter code: Translation initiation factor IF-1 (72 aa).

The region spanning 1–72 is the S1-like domain; the sequence is MAKDDVIEIE…TKGRITYRFK (72 aa).

Belongs to the IF-1 family. As to quaternary structure, component of the 30S ribosomal translation pre-initiation complex which assembles on the 30S ribosome in the order IF-2 and IF-3, IF-1 and N-formylmethionyl-tRNA(fMet); mRNA recruitment can occur at any time during PIC assembly.

The protein localises to the cytoplasm. Functionally, one of the essential components for the initiation of protein synthesis. Stabilizes the binding of IF-2 and IF-3 on the 30S subunit to which N-formylmethionyl-tRNA(fMet) subsequently binds. Helps modulate mRNA selection, yielding the 30S pre-initiation complex (PIC). Upon addition of the 50S ribosomal subunit IF-1, IF-2 and IF-3 are released leaving the mature 70S translation initiation complex. This chain is Translation initiation factor IF-1, found in Latilactobacillus sakei subsp. sakei (strain 23K) (Lactobacillus sakei subsp. sakei).